Here is a 1325-residue protein sequence, read N- to C-terminus: Cyclic nucleotide-gated channel beta-1 (1325 aa).

Disordered stretches follow at residues 1 to 124 (MLGW…QVAV), 147 to 198 (PQPV…SLWL), 227 to 279 (AVLD…PGDP), 340 to 470 (WEDA…LDSC), 482 to 637 (LERT…SQNS), and 659 to 694 (KEKLIDPDVTSDEESPKPSPAKKAPEPDPAQKPAEA). At 1–732 (MLGWVQRVLP…SIDPLTNLMY (732 aa)) the chain is on the cytoplasmic side. A compositionally biased stretch (acidic residues) spans 43–81 (PQQEPEPEPEPEPEPEPEPEPEPEPEPEPEPEPVPEEAP). The span at 105-121 (LQETQVADPAQPTSQAQ) shows a compositional bias: polar residues. Over residues 370–379 (IPRELTKIQE) the composition is skewed to basic and acidic residues. Composition is skewed to acidic residues over residues 380–393 (EREDEQEEDEEEKE), 418–463 (EEKE…EEEP), and 495–517 (LPEEKEEKEEEKEEEKEEEEEKK). Residues 518–527 (EEEVEKKEEG) are compositionally biased toward basic and acidic residues. Positions 560 to 571 (TLPPPERPPPSP) are enriched in pro residues. The interval 633 to 643 (ASQNSAIINDR) is calmodulin-binding CaM1. A helical transmembrane segment spans residues 733-754 (ILWLFFVVLAWNWNCWLIPVRW). Over 755-763 (AFPYQRADN) the chain is Extracellular. The helical transmembrane segment at 764–785 (IHFWLLMDYLCDFIYLLDITVF) threads the bilayer. The Cytoplasmic portion of the chain corresponds to 786-800 (QMRLQFVKGGDIITD). A helical membrane pass occupies residues 801–820 (KKEMRNNYLKSRRFKMDLLC). The Extracellular portion of the chain corresponds to 821–836 (LLPLDFLYLKLGINPL). A helical transmembrane segment spans residues 837-849 (LRLPRCLKYMAFF). Residues 850-861 (EFNNRLEAILSK) are Cytoplasmic-facing. The helical transmembrane segment at 862–884 (AYVYRVIRTTAYLLYSLHLNSCL) threads the bilayer. An ion conduction pathway region spans residues 862–961 (AYVYRVIRTT…IGQMRDVVGA (100 aa)). Residues 885–907 (YYWASAFQGIGSTHWVYDGVGNS) lie on the Extracellular side of the membrane. 2 helical membrane-spanning segments follow: residues 908–934 (YIRCYYWAVKTLITIGGLPDPQTLFEI) and 935–960 (VFQLLNYFTGVFAFSVMIGQMRDVVG). Topologically, residues 961–1325 (AATAGQTYYR…VLEEKKEGAE (365 aa)) are cytoplasmic. Residues 964-1040 (AGQTYYRSCM…SIVSKVALFQ (77 aa)) form a C-linker region. Positions 1038 to 1142 (LFQGCDRQMI…LDKKDLNEIL (105 aa)) are cNMP-binding domain. Residues 1044-1160 (RQMIFDMLKR…LLRKKARRML (117 aa)) are cyclic nucleotide-binding domain. Positions 1105, 1106, 1108, 1118, and 1119 each coordinate 3',5'-cyclic GMP. A 3',5'-cyclic AMP-binding site is contributed by Arg-1118. Residues 1224–1230 (QQQLLEQ) form a calmodulin-binding CaM2 region. Residues 1226 to 1250 (QLLEQAKSSQEAGGEEGSGATDQPA) are compositionally biased toward low complexity. Residues 1226 to 1325 (QLLEQAKSSQ…VLEEKKEGAE (100 aa)) are disordered. Residues 1262–1279 (KPPGPPEPSAQSSPPPAS) are compositionally biased toward pro residues.

This sequence belongs to the cyclic nucleotide-gated cation channel (TC 1.A.1.5) family. CNGB1 subfamily. In terms of tissue distribution, rod outer segments. Olfactory sensory neurons.

It localises to the cell projection. Its subcellular location is the cilium membrane. It catalyses the reaction Ca(2+)(in) = Ca(2+)(out). The enzyme catalyses Na(+)(in) = Na(+)(out). It carries out the reaction K(+)(in) = K(+)(out). The catalysed reaction is NH4(+)(in) = NH4(+)(out). It catalyses the reaction Rb(+)(in) = Rb(+)(out). The enzyme catalyses Li(+)(in) = Li(+)(out). It carries out the reaction Cs(+)(in) = Cs(+)(out). Pore-forming subunit of the rod cyclic nucleotide-gated channel. Mediates rod photoresponses at dim light converting transient changes in intracellular cGMP levels into electrical signals. In the dark, cGMP levels are high and keep the channel open enabling a steady inward current carried by Na(+) and Ca(2+) ions that leads to membrane depolarization and neurotransmitter release from synaptic terminals. Upon photon absorption cGMP levels decline leading to channel closure and membrane hyperpolarization that ultimately slows neurotransmitter release and signals the presence of light, the end point of the phototransduction cascade. Pore-forming subunit of the olfactory cyclic nucleotide-gated channel. Operates in the cilia of olfactory sensory neurons where chemical stimulation of the odorant is converted to an electrical signal. Mediates odorant-induced cAMP-dependent Ca(2+) influx triggering neuron depolarization. The rise of intracellular Ca(2+) levels potentiates the olfactory response by activating Ca(2+)-dependent Cl(-) channels, but it also serves as a negative feedback signal to desensitize the channel for rapid adaptation to odorants. Conducts cGMP- and cAMP-gated ion currents, with permeability for monovalent and divalent cations. The selectivity for Ca(2+) over Na(+) increases with cGMP concentrations, whereas the selectivity among monovalent ions is independent of the cGMP levels. The chain is Cyclic nucleotide-gated channel beta-1 from Mus musculus (Mouse).